Here is a 219-residue protein sequence, read N- to C-terminus: Ribose-5-phosphate isomerase A (219 aa).

Substrate is bound by residues 28–31 (SGST), 81–84 (DGAD), and 94–97 (KGGG). The Proton acceptor role is filled by E103. K121 contacts substrate.

It belongs to the ribose 5-phosphate isomerase family. As to quaternary structure, homodimer.

It catalyses the reaction aldehydo-D-ribose 5-phosphate = D-ribulose 5-phosphate. It functions in the pathway carbohydrate degradation; pentose phosphate pathway; D-ribose 5-phosphate from D-ribulose 5-phosphate (non-oxidative stage): step 1/1. Its function is as follows. Catalyzes the reversible conversion of ribose-5-phosphate to ribulose 5-phosphate. This chain is Ribose-5-phosphate isomerase A, found in Haemophilus influenzae (strain 86-028NP).